Reading from the N-terminus, the 414-residue chain is Methanesulfonate monooxygenase hydroxylase subunit alpha (414 aa).

The Rieske domain occupies 44–163; that stretch reads WVPFRHESEL…CEVKFGGFVW (120 aa). Positions 86, 88, 115, and 118 each coordinate [2Fe-2S] cluster. Position 225 (H225) interacts with Fe cation.

Belongs to the bacterial ring-hydroxylating dioxygenase alpha subunit family. The MSA monooxygenase system consists of 4 proteins: the 2 subunits of the hydroxylase component (MsmA and MsmB), a ferredoxin (MsmC) and a ferredoxin reductase (MsmD). The hydroxylase component consists of a 3 alpha (MsmA) and 3 beta (MsmB) subunits. It depends on [2Fe-2S] cluster as a cofactor. Fe cation is required as a cofactor.

It is found in the cytoplasm. It catalyses the reaction methanesulfonate + NADH + O2 = sulfite + formaldehyde + NAD(+) + H2O. MSAMO is inhibited by metal chelators (such as bathophenanthroline, bathocuprione, neocuprione, alpha-alpha-dipyridil and sodium EDTA) and by sodium azide, sodium arsenate and potassium cyanide. Functionally, methanesulfonate monooxygenase (MSAMO) mediates the primary degradation of methanesulfonic acid (MSA) to produce formaldehyd and inorganic sulfite by initial hydroxylation of the carbon atom prior to spontaneous cleavage of the unstable hydroxymethanesulfonic acid. MSAMO has a restricted substrate range that includes only the short-chain aliphatic sulfonates (methane- to butanesulfonate) and excludes all larger molecules, such as arylsulfonates and aromatic sulfonates. All MSAMO components are required for enzyme activity. The protein is Methanesulfonate monooxygenase hydroxylase subunit alpha of Methylosulfonomonas methylovora.